A 404-amino-acid chain; its full sequence is Aspartokinase 1 (404 aa).

Position 7 to 10 (7 to 10 (KFGG)) interacts with ATP. 25–30 (HIKEAI) serves as a coordination point for substrate. ATP is bound at residue serine 41. Substrate contacts are provided by residues 52–54 (TDS), glutamate 79, 130–131 (LA), 155–158 (RGGS), and serine 158. ATP-binding positions include 178–179 (TD) and 184–189 (MTADPR). Substrate-binding positions include 299–301 (SVD), 355–356 (VT), 369–370 (PI), and 376–377 (SH). An ACT domain is found at 344-404 (AVGAGIMGVP…ALHEVFELSK (61 aa)).

The protein belongs to the aspartokinase family. Tetramer consisting of 2 isoforms Alpha (catalytic) and 2 isoforms Beta (function not known).

The enzyme catalyses L-aspartate + ATP = 4-phospho-L-aspartate + ADP. Its pathway is amino-acid biosynthesis; L-lysine biosynthesis via DAP pathway; (S)-tetrahydrodipicolinate from L-aspartate: step 1/4. The protein operates within amino-acid biosynthesis; L-methionine biosynthesis via de novo pathway; L-homoserine from L-aspartate: step 1/3. It functions in the pathway amino-acid biosynthesis; L-threonine biosynthesis; L-threonine from L-aspartate: step 1/5. Diaminopimelate-sensitive. Functionally, catalyzes the phosphorylation of the beta-carboxyl group of aspartic acid with ATP to yield 4-phospho-L-aspartate, which is involved in the branched biosynthetic pathway leading to the biosynthesis of amino acids threonine, isoleucine and methionine. This Bacillus subtilis (strain 168) protein is Aspartokinase 1 (dapG).